We begin with the raw amino-acid sequence, 705 residues long: Forkhead box protein P1 (705 aa).

The segment covering 1–19 has biased composition (polar residues); that stretch reads MMQESGSETKSNGSAIQNG. Residues 1-41 form a disordered region; it reads MMQESGSETKSNGSAIQNGSSGGNHLLECGALRDTRSNGEA. Ser113 carries the post-translational modification Phosphoserine. Disordered regions lie at residues 267–286 and 291–326; these read HTAE…TSTC and APSK…EHPH. Polar residues-rich tracts occupy residues 276–286 and 291–311; these read NHSSLDLTSTC and APSK…QLSV. Residues 314–326 are compositionally biased toward basic and acidic residues; that stretch reads PKRESLSHEEHPH. Lys315 is covalently cross-linked (Glycyl lysine isopeptide (Lys-Gly) (interchain with G-Cter in SUMO2)). The C2H2-type zinc finger occupies 334-359; it reads GVCKWPGCEAVCDDFPAFLKHLNSEH. The tract at residues 376 to 397 is leucine-zipper; the sequence is VQQLELQLAKDKERLQAMMTHL. Residues Lys400 and Lys405 each participate in a glycyl lysine isopeptide (Lys-Gly) (interchain with G-Cter in SUMO2) cross-link. The tract at residues 410–414 is CTBP1-binding; that stretch reads PLNLV. Positions 418–431 are enriched in polar residues; the sequence is TLSKSASEASPQSL. Positions 418–450 are disordered; it reads TLSKSASEASPQSLPHTPTTPTAPLTPVTQGPS. The span at 432 to 446 shows a compositional bias: low complexity; sequence PHTPTTPTAPLTPVT. Residue Lys470 forms a Glycyl lysine isopeptide (Lys-Gly) (interchain with G-Cter in SUMO2) linkage. A DNA-binding region (fork-head) is located at residues 493–583; it reads RPPFTYASLI…PQKISGNPSL (91 aa). The disordered stretch occupies residues 639 to 705; sequence EHTNSNESDS…EDEPVNEDME (67 aa). Residues 640-651 are compositionally biased toward polar residues; that stretch reads HTNSNESDSSPG. At Thr681 the chain carries Phosphothreonine. At Ser686 the chain carries Phosphoserine. The segment covering 695–705 has biased composition (acidic residues); it reads YEDEPVNEDME.

As to quaternary structure, forms homodimers and heterodimers with FOXP2 and FOXP4. Dimerization is required for DNA-binding. Self-associates. Interacts with CTBP1. Interacts with NCOR2 and AR. Interacts with FOXP2. Interacts with TBR1. Interacts with AURKA; this interaction facilitates the phosphorylation of FOXP1, which suppresses the expression of FBXL7. Interacts with ZMYM2. Isoform 5 is specifically expressed in embryonic stem cells. Highest expression in the lung, brain, and spleen. Lower expression in heart, skeletal muscle, kidney, small intestine (isoform 3 not present) and liver.

It is found in the nucleus. In terms of biological role, transcriptional repressor. Can act with CTBP1 to synergistically repress transcription but CTPBP1 is not essential. Plays an important role in the specification and differentiation of lung epithelium. Acts cooperatively with FOXP4 to regulate lung secretory epithelial cell fate and regeneration by restricting the goblet cell lineage program; the function may involve regulation of AGR2. Essential transcriptional regulator of B-cell development. Involved in regulation of cardiac muscle cell proliferation. Involved in the columnar organization of spinal motor neurons. Promotes the formation of the lateral motor neuron column (LMC) and the preganglionic motor column (PGC) and is required for respective appropriate motor axon projections. The segment-appropriate generation of spinal cord motor columns requires cooperation with other Hox proteins. Can regulate PITX3 promoter activity; may promote midbrain identity in embryonic stem cell-derived dopamine neurons by regulating PITX3. Negatively regulates the differentiation of T follicular helper cells T(FH)s. Involved in maintenance of hair follicle stem cell quiescence; the function probably involves regulation of FGF18. Represses transcription of various pro-apoptotic genes and cooperates with NF-kappa B-signaling in promoting B-cell expansion by inhibition of caspase-dependent apoptosis. Binds to CSF1R promoter elements and is involved in regulation of monocyte differentiation and macrophage functions; repression of CSF1R in monocytes seems to involve NCOR2 as corepressor. Involved in endothelial cell proliferation, tube formation and migration indicative for a role in angiogenesis; the role in neovascularization seems to implicate suppression of SEMA5B. Can negatively regulate androgen receptor signaling. Acts as a transcriptional activator of the FBXL7 promoter; this activity is regulated by AURKA. Its function is as follows. Involved in transcriptional regulation in embryonic stem cells (ESCs). Stimulates expression of transcription factors that are required for pluripotency and decreases expression of differentiation-associated genes. Has distinct DNA-binding specifities as compared to the canonical form and preferentially binds DNA with the sequence 5'-CGATACAA-3' (or closely related sequences). Promotes ESC self-renewal and pluripotency. In Mus musculus (Mouse), this protein is Forkhead box protein P1 (Foxp1).